A 178-amino-acid chain; its full sequence is MMTYIVTILSTIFVVSFVGFSSKPSPIYGGVGLIVSGGVGCGIVLNYGGSFLGLMVFLIYLGGMLVVFGYTTAMAMEEYPEVWVSNNTVLLTFLLGLVGEVVLMIYLLLGEEEVKFEVVLNFNSEGDWVIYDTGDSGMFSEEAMGVAALYSYGYWLVIVSGWSLVTCIIVVMEITRGN.

5 consecutive transmembrane segments (helical) span residues methionine 1–serine 21, serine 25–leucine 45, glycine 48–phenylalanine 68, valine 89–leucine 109, and tyrosine 152–methionine 172.

This sequence belongs to the complex I subunit 6 family.

Its subcellular location is the mitochondrion membrane. It catalyses the reaction a ubiquinone + NADH + 5 H(+)(in) = a ubiquinol + NAD(+) + 4 H(+)(out). Its function is as follows. Core subunit of the mitochondrial membrane respiratory chain NADH dehydrogenase (Complex I) that is believed to belong to the minimal assembly required for catalysis. Complex I functions in the transfer of electrons from NADH to the respiratory chain. The immediate electron acceptor for the enzyme is believed to be ubiquinone. The polypeptide is NADH-ubiquinone oxidoreductase chain 6 (MT-ND6) (Pseudosoriculus fumidus (Taiwanese brown-toothed shrew)).